An 868-amino-acid polypeptide reads, in one-letter code: Leucine--tRNA ligase (868 aa).

A 'HIGH' region motif is present at residues 42–52 (PYPSGKLHMGH). A 'KMSKS' region motif is present at residues 627 to 631 (KMSKS). Lysine 630 provides a ligand contact to ATP.

This sequence belongs to the class-I aminoacyl-tRNA synthetase family.

It is found in the cytoplasm. It catalyses the reaction tRNA(Leu) + L-leucine + ATP = L-leucyl-tRNA(Leu) + AMP + diphosphate. The protein is Leucine--tRNA ligase of Pseudomonas putida (strain W619).